Consider the following 193-residue polypeptide: Putative F-box protein At1g31072 (193 aa).

One can recognise an F-box domain in the interval 4-53 (EKTLDSIPIDVFLDIFSRLPAKSVGRSCCVSNRWASILGSQDFKELFLTM).

This is Putative F-box protein At1g31072 from Arabidopsis thaliana (Mouse-ear cress).